Consider the following 311-residue polypeptide: MSVLVKEVIEKLRLDIVYGEPELLEKEINIADITRPGLEMTGYFDYYTPERIQLLGMKEWSYLISMPSNSRYEVLKKMFLPETPAVIVARGLVVPEEMLKAARECKIAILTSRAATSRLSGELSSYLDSRLAERTSVHGVLMDIYGMGVLIQGDSGIGKSETGLELVKRGHRLVADDRVDIFAKDEITLWGEPAEILKHLIEIRGVGIIDVMSLYGASAVKDSSQVQLAVYLENYDTHKTFDRLGNNAEELEVSGVAIPRIRIPVKTGRNISVVIEAAAMNYRAKEMGFDATRLFDERLTSLIARNEVQNA.

Residues His138 and Lys159 contribute to the active site. 153–160 (GDSGIGKS) is a binding site for ATP. A Mg(2+)-binding site is contributed by Ser160. Catalysis depends on Asp177, which acts as the Proton acceptor; for phosphorylation activity. Proton donor; for dephosphorylation activity. Positions 201-210 (IEIRGVGIID) are important for the catalytic mechanism of both phosphorylation and dephosphorylation. Residue Glu202 participates in Mg(2+) binding. Arg243 is a catalytic residue. Residues 264-269 (PVKTGR) form an important for the catalytic mechanism of dephosphorylation region.

This sequence belongs to the HPrK/P family. As to quaternary structure, homohexamer. It depends on Mg(2+) as a cofactor.

It carries out the reaction [HPr protein]-L-serine + ATP = [HPr protein]-O-phospho-L-serine + ADP + H(+). The catalysed reaction is [HPr protein]-O-phospho-L-serine + phosphate + H(+) = [HPr protein]-L-serine + diphosphate. Catalyzes the ATP- as well as the pyrophosphate-dependent phosphorylation of a specific serine residue in HPr, a phosphocarrier protein of the phosphoenolpyruvate-dependent sugar phosphotransferase system (PTS). HprK/P also catalyzes the pyrophosphate-producing, inorganic phosphate-dependent dephosphorylation (phosphorolysis) of seryl-phosphorylated HPr (P-Ser-HPr). The two antagonistic activities of HprK/P are regulated by several intracellular metabolites, which change their concentration in response to the absence or presence of rapidly metabolisable carbon sources (glucose, fructose, etc.) in the growth medium. Therefore, by controlling the phosphorylation state of HPr, HPrK/P is a sensor enzyme that plays a major role in the regulation of carbon metabolism and sugar transport: it mediates carbon catabolite repression (CCR), and regulates PTS-catalyzed carbohydrate uptake and inducer exclusion. This chain is HPr kinase/phosphorylase, found in Streptococcus pneumoniae serotype 2 (strain D39 / NCTC 7466).